We begin with the raw amino-acid sequence, 184 residues long: tRNA (cytidine(56)-2'-O)-methyltransferase (184 aa).

S-adenosyl-L-methionine-binding positions include Leu87, 112–116, and 130–137; these read GAEKV and VANQPHSE.

The protein belongs to the aTrm56 family. Homodimer.

The protein localises to the cytoplasm. The enzyme catalyses cytidine(56) in tRNA + S-adenosyl-L-methionine = 2'-O-methylcytidine(56) in tRNA + S-adenosyl-L-homocysteine + H(+). Specifically catalyzes the AdoMet-dependent 2'-O-ribose methylation of cytidine at position 56 in tRNAs. The polypeptide is tRNA (cytidine(56)-2'-O)-methyltransferase (Methanocorpusculum labreanum (strain ATCC 43576 / DSM 4855 / Z)).